An 838-amino-acid chain; its full sequence is V-type proton ATPase 116 kDa subunit a 1 (838 aa).

Over 1–388 (MGELFRSEEM…DAYGIGTYRE (388 aa)) the chain is Cytoplasmic. Residues 389–407 (INPAPYTIITFPFLFAVMF) traverse the membrane as a helical segment. Residues 408–409 (GD) are Vacuolar-facing. A helical membrane pass occupies residues 410 to 426 (FGHGILMTLIAIWMVLR). The Cytoplasmic segment spans residues 427–441 (ESRILSQKSDNEMFS). A helical membrane pass occupies residues 442-471 (TVFSGRYIILLMGLFSTYTGLIYNDCFSKS). The Vacuolar segment spans residues 472-535 (LNMFGSSWSV…ANNKLAFLNS (64 aa)). A helical transmembrane segment spans residues 536–555 (FKMKMSVILGIIHMLFGVML). The Cytoplasmic segment spans residues 556–573 (SLLNHIYFKKPLNIYLGF). The chain crosses the membrane as a helical span at residues 574–594 (IPEMIFMSSLFGYLVILIFYK). Residues 595–639 (WTAYDAHTSKEAPSPLIHFINMFLFSYGDTSNKMLYRGQKGIQCF) are Vacuolar-facing. The chain crosses the membrane as a helical span at residues 640–659 (LVVVALLCVPWMLVAKPLVL). Residues 660–725 (RHQYLRRKHL…DTVVYQAIHT (66 aa)) lie on the Cytoplasmic side of the membrane. A helical membrane pass occupies residues 726-750 (IEYCLGCISNTASYLRLWALSLAHA). Topologically, residues 751 to 771 (QLSEVLWTMVIHTGLSVRSLA) are vacuolar. A helical transmembrane segment spans residues 772-810 (GGFGLVFIFAAFATLTVAILLVMEGLSAFLHALRLHWIE). Topologically, residues 811 to 838 (FQNKFYTGTGFKFLPFSFDPIREGKFDD) are cytoplasmic.

The protein belongs to the V-ATPase 116 kDa subunit family. As to quaternary structure, V-ATPase is a heteromultimeric enzyme made up of two complexes: the ATP-hydrolytic V1 complex and the proton translocation V0 complex. The V1 complex consists of three catalytic AB heterodimers that form a heterohexamer, three peripheral stalks each consisting of EG heterodimers, one central rotor including subunits D and F, and the regulatory subunits C and H. The proton translocation complex V0 consists of the proton transport subunit a, a ring of proteolipid subunits c9c'', rotary subunit d, subunits e and f, and two accessory subunits. In terms of tissue distribution, detected in brain (at protein level). Highest expression in brain, intermediate levels in kidney, and relatively low levels in bone and liver.

The protein localises to the cytoplasmic vesicle. It localises to the clathrin-coated vesicle membrane. Its subcellular location is the secretory vesicle. It is found in the synaptic vesicle membrane. The protein resides in the melanosome. In terms of biological role, subunit of the V0 complex of vacuolar(H+)-ATPase (V-ATPase), a multisubunit enzyme composed of a peripheral complex (V1) that hydrolyzes ATP and a membrane integral complex (V0) that translocates protons. V-ATPase is responsible for acidifying and maintaining the pH of intracellular compartments and in some cell types, is targeted to the plasma membrane, where it is responsible for acidifying the extracellular environment. Required for assembly and activity of the vacuolar ATPase. This Gallus gallus (Chicken) protein is V-type proton ATPase 116 kDa subunit a 1 (ATP6V0A1).